Reading from the N-terminus, the 252-residue chain is Chitooligosaccharide deacetylase (252 aa).

Positions 61 and 125 each coordinate Mg(2+).

This sequence belongs to the YdjC deacetylase family. ChbG subfamily. Homodimer. Mg(2+) serves as cofactor.

The protein resides in the cytoplasm. It catalyses the reaction N,N'-diacetylchitobiose + H2O = N-acetyl-beta-D-glucosaminyl-(1-&gt;4)-D-glucosamine + acetate. It carries out the reaction diacetylchitobiose-6'-phosphate + H2O = N'-monoacetylchitobiose-6'-phosphate + acetate. The protein operates within glycan degradation; chitin degradation. Functionally, involved in the degradation of chitin. ChbG is essential for growth on the acetylated chitooligosaccharides chitobiose and chitotriose but is dispensable for growth on cellobiose and chitosan dimer, the deacetylated form of chitobiose. Deacetylation of chitobiose-6-P and chitotriose-6-P is necessary for both the activation of the chb promoter by the regulatory protein ChbR and the hydrolysis of phosphorylated beta-glucosides by the phospho-beta-glucosidase ChbF. Catalyzes the removal of only one acetyl group from chitobiose-6-P to yield monoacetylchitobiose-6-P, the inducer of ChbR and the substrate of ChbF. This is Chitooligosaccharide deacetylase from Salmonella paratyphi B (strain ATCC BAA-1250 / SPB7).